Here is a 785-residue protein sequence, read N- to C-terminus: E3 UFM1-protein ligase 1 homolog (785 aa).

Residues 405 to 483 are disordered; sequence ASFQDQDDDG…GGGGGNKKTV (79 aa).

Belongs to the UFL1 family.

Its function is as follows. E3 UFM1-protein ligase that mediates ufmylation of target proteins. The sequence is that of E3 UFM1-protein ligase 1 homolog from Drosophila pseudoobscura pseudoobscura (Fruit fly).